We begin with the raw amino-acid sequence, 191 residues long: Putative NADH dehydrogenase/NAD(P)H nitroreductase (191 aa).

127-132 lines the NAD(+) pocket; it reads AAHSLG.

Belongs to the nitroreductase family. The cofactor is FMN.

The polypeptide is Putative NADH dehydrogenase/NAD(P)H nitroreductase (Methanothermobacter thermautotrophicus (strain ATCC 29096 / DSM 1053 / JCM 10044 / NBRC 100330 / Delta H) (Methanobacterium thermoautotrophicum)).